The chain runs to 2287 residues: MKGHQFKSWIFELREILREIKNSRYFLDSWTQFNSAGFFIHIFFHQESFIKLLDSRIWSILLSRNSQGSTSNRYFTIKYVVLFVVAVLIYRINNRKMVERKNPYLTRLLTIPMNSIGPKNDTLEESSESSNINRLIVPLLYLPKGKKISESYFLDPKESTRVLPITKKYIMPESNWGSRWWRNWIGKKSDSSCKISNETIAGIEISFKEKDIKYLEFLFVYYMDDPIRKDHDWEFFDRLSPRKRRNIINLNSGQLFEILVKDWIYYLMFAFREKIPKEVEGFFKQQGTGSIIQSNDIEHVSHLFLRNKRAISLQNCAQFHMWQFRQDLFVSWGKSPHESDFLRNNMSRENWIWLDNVWLVNKDRFFSKVRNVSSNIQYDSTRSSFIQVTGSSQLKGSSDQSKDYFDSIRNEDSKYHTLINQREIQQLKERSILCWDPSFLQTERTEIESERFPKILSGYSSMCRLFMEREKQMNNHLLPQEIEEFLGNPARATRSFFSDRWSELHLSSNPTERSTRDQKLLKKEQKKHLVLSRRSENKEIVNLFKIIMYLQNTVSIHPISSYPGCDMVPKGELDSSNKISFLNKNPFWGLFHLFHDRNSGRYTLHHDFESEEIFQEMADLFTLSITEPDLVYHKGFAFSIDSSGLGQKHFLNELFNSRDESKNHSLLVLPPLFYEENESFYRRIIKKWVQTSCGNNLEDPKPKIVVFTSNNIMEAVNQYRLIRNLIQIQYSTHGYIRNVLNRFNCNFEYGIQRYQIGNDTLNHRTIMKYTINQHLSNLKKSQKKWFDPLIFISRTERSMNRDPNAYRYKWSNGSKNFQEHLDYFISEQNSRFQVVFDRFHINQYSIDWSEVIDKKDLSKSLCFFLSKLLLFLPKFLLFLSNSLPSFFFVSFGGIPIHRSEIHIYELKGPNNPLCNQLLESIGLQIFHLKKWKPLLLDDQDTSQKSKFLINGGTISPFLFNKIPKWMIDSFHTRKNRRKSFDNTDSYFSMISHDPDNWLNPVKPFHRSSLIYSFYKANRLRFLNNQYHFCFYCNKRFPFYVEKACINNYDFTYGQFLNILFIRNKIFSFCDGQKKHAFLKRDTISPIESQVSNILIPNDFPQSGDEGYNLYKSFHFPIRYDLFVRGAIYSIADISGTPLTEGQIVHFEKTYCQPLSDMNIPDSEGKNLHQYLNFNSNMGLIHTPCSEKYLPSEKRKKRSPCLKKCLEKGQMYRTFQQDSVFSTLSKWNLFQTYIPWFLTSTGYKYLNFIFLDTFSDLLPILSSSQKFVSIFHDIMHGSDILWRIRQIPLCLPQWNLISEIWNLISEIPGNCLHNLLLSEEIIHRNNELLLISTHLRSLNVQEFFYSILFLLLVAGYLVRTHLLFVSRVYSELQTEFEKVKSLMIPSYMIELRKLLDRYPTSELNSFWLKNLFLVALEQLGDSLEEIRSFAFGGNMLWGGGPTYGVKSIRSKKKYLNLIDLISIIPNPINRIAFSRNTRHLSHPSKTIYSLIRKIKNVNGDWIDDKIESWVLNSNSIDDKEREFLVQFSTLTTEKRIDQILLSLTHSHHLSKNNSGYQMIEQPGAIYLRYLVDIHKKYLMIYEFNTSCLAERRIFLANYQTITYSQTLRGANSFHFPSHGKPFSLRLALPPPSRGILVIGSIGTGRSYLVKYLATNSYVPFITVFLNKFLDNKPKGFLIDDSDDIDDSYDSDDIDRDLDMELELLTMMNTLTMDMMPEIDRFYITFQFELAKAMSPCIIWIPNIHDLDVNESNYLSLGLLVNYLSRDCERCSTRNILVIASTHIPQKVDPALIAPNKLNTCIKIRRLLISQQRKHFFTLSYTRGFHLEKKMSHTNGFGSTTMGSNVRDLVALTNEALSISIIQKKSIIDTNIIRSVLHRQTWDFRSQVRSVQDHGILFYQIGRAVSQNVLLSNCSIDPISIYMKKKSCDGGDSYLYKWYFELGTSMKKLTILLYLLSCSAGSVAQDLWSLPGPDEKNGITSYGLVENNSDLVHGLLEVEGALVGSSRTEKDCSQFDKDRVTLLLRSEPRNPLNMIQNGSYSIVDQRFLYEKYESEFEEGGGVLDPQQIEEDFFNHIVWAPRIWSPWGFLFYCIERPNELGFPYWARSFRDKRIIYDEEDELQENDSEFLQGGTMQYQTRDRSSKEQGFFRISQFIWDPADPLFFLFKDQPFVSVFSHRQFFTDEEMSRELLTSQTDLPTSIYKHWFIKNTQEKHFELLIHCQRWLRINSSLSNGFFRSNTLSESYQYLSNLFLSNEALLDQMTKTLLRKRWLFPDEMVVAICSNNESLV.

ATP is bound at residue 1638–1645 (GSIGTGRS).

Belongs to the Ycf2 family.

Its subcellular location is the plastid. It is found in the chloroplast stroma. Functionally, probable ATPase of unknown function. Its presence in a non-photosynthetic plant (Epifagus virginiana) and experiments in tobacco indicate that it has an essential function which is probably not related to photosynthesis. The chain is Protein Ycf2 from Glycine max (Soybean).